A 275-amino-acid polypeptide reads, in one-letter code: 4-hydroxy-tetrahydrodipicolinate reductase (275 aa).

Residues 8–13 (GATGRM), 100–102 (GTT), and 126–129 (SPNM) contribute to the NAD(+) site. His-160 serves as the catalytic Proton donor/acceptor. Position 161 (His-161) interacts with (S)-2,3,4,5-tetrahydrodipicolinate. Catalysis depends on Lys-164, which acts as the Proton donor. 170 to 171 (GT) lines the (S)-2,3,4,5-tetrahydrodipicolinate pocket.

The protein belongs to the DapB family.

Its subcellular location is the cytoplasm. The enzyme catalyses (S)-2,3,4,5-tetrahydrodipicolinate + NAD(+) + H2O = (2S,4S)-4-hydroxy-2,3,4,5-tetrahydrodipicolinate + NADH + H(+). The catalysed reaction is (S)-2,3,4,5-tetrahydrodipicolinate + NADP(+) + H2O = (2S,4S)-4-hydroxy-2,3,4,5-tetrahydrodipicolinate + NADPH + H(+). The protein operates within amino-acid biosynthesis; L-lysine biosynthesis via DAP pathway; (S)-tetrahydrodipicolinate from L-aspartate: step 4/4. Its function is as follows. Catalyzes the conversion of 4-hydroxy-tetrahydrodipicolinate (HTPA) to tetrahydrodipicolinate. The protein is 4-hydroxy-tetrahydrodipicolinate reductase of Methanopyrus kandleri (strain AV19 / DSM 6324 / JCM 9639 / NBRC 100938).